A 574-amino-acid polypeptide reads, in one-letter code: Acyloxyacyl hydrolase (574 aa).

The first 22 residues, 1-22 (MKFPWKVFKTTLLLLLLSHSLA), serve as a signal peptide directing secretion. The propeptide occupies 23-33 (SVPSEDQPGDS). One can recognise a Saposin B-type domain in the interval 36–117 (HGQSCLGCVV…YALEFCKRGA (82 aa)). The interval 37–69 (GQSCLGCVVLVSVIEQLAEVHNSSVQVAMERLC) is important for enzyme activity, localization to cytoplasmic vesicles, and protein stability. Cystine bridges form between Cys-40/Cys-113, Cys-43/Cys-107, Cys-69/Cys-82, Cys-122/Cys-452, Cys-159/Cys-168, Cys-205/Cys-229, Cys-248/Cys-328, and Cys-375/Cys-458. N-linked (GlcNAc...) asparagine glycosylation occurs at Asn-58. The segment at 172 to 176 (ELSIK) is lipopolysaccharide binding. Asp-183, Asp-185, Asp-187, His-189, Asp-204, Asn-206, Asp-207, Asp-209, Val-212, Asp-222, Asp-226, Asn-228, Asn-230, Ile-232, and Glu-244 together coordinate Ca(2+). N-linked (GlcNAc...) asparagine glycosylation is present at Asn-206. Ser-262 is a catalytic residue. Asn-408 and Asn-465 each carry an N-linked (GlcNAc...) asparagine glycan.

Heterodimer of the large and small subunits; disulfide-linked. Requires Ca(2+) as cofactor. Cleaved into a large and a small subunit. Post-translationally, the small subunit is N-glycosylated. In terms of tissue distribution, detected in peritoneal macrophages (at protein level). Strongly expressed in kidney cortex, where it may be produced by proximal tubule cells. In liver, expressed at high levels in Kupffer cells. Expressed by dendritic cells. Detected at low levels in alveolar macrophages.

It localises to the secreted. The protein resides in the cytoplasmic vesicle. It catalyses the reaction a 3-(acyloxy)acyl derivative of bacterial toxin + H2O = a 3-hydroxyacyl derivative of bacterial toxin + a fatty acid + H(+). Functionally, removes the secondary (acyloxyacyl-linked) fatty acyl chains from the lipid A region of bacterial lipopolysaccharides (LPS). By breaking down LPS, terminates the host response to bacterial infection and prevents prolonged and damaging inflammatory responses. In peritoneal macrophages, seems to be important for recovery from a state of immune tolerance following infection by Gram-negative bacteria. This Mus musculus (Mouse) protein is Acyloxyacyl hydrolase.